A 164-amino-acid polypeptide reads, in one-letter code: Crossover junction endodeoxyribonuclease RuvC (164 aa).

Catalysis depends on residues Asp-7, Glu-67, and Asp-140. 3 residues coordinate Mg(2+): Asp-7, Glu-67, and Asp-140.

It belongs to the RuvC family. As to quaternary structure, homodimer which binds Holliday junction (HJ) DNA. The HJ becomes 2-fold symmetrical on binding to RuvC with unstacked arms; it has a different conformation from HJ DNA in complex with RuvA. In the full resolvosome a probable DNA-RuvA(4)-RuvB(12)-RuvC(2) complex forms which resolves the HJ. Requires Mg(2+) as cofactor.

Its subcellular location is the cytoplasm. The catalysed reaction is Endonucleolytic cleavage at a junction such as a reciprocal single-stranded crossover between two homologous DNA duplexes (Holliday junction).. The RuvA-RuvB-RuvC complex processes Holliday junction (HJ) DNA during genetic recombination and DNA repair. Endonuclease that resolves HJ intermediates. Cleaves cruciform DNA by making single-stranded nicks across the HJ at symmetrical positions within the homologous arms, yielding a 5'-phosphate and a 3'-hydroxyl group; requires a central core of homology in the junction. The consensus cleavage sequence is 5'-(A/T)TT(C/G)-3'. Cleavage occurs on the 3'-side of the TT dinucleotide at the point of strand exchange. HJ branch migration catalyzed by RuvA-RuvB allows RuvC to scan DNA until it finds its consensus sequence, where it cleaves and resolves the cruciform DNA. The polypeptide is Crossover junction endodeoxyribonuclease RuvC (Finegoldia magna (strain ATCC 29328 / DSM 20472 / WAL 2508) (Peptostreptococcus magnus)).